The primary structure comprises 485 residues: Glutamyl-tRNA(Gln) amidotransferase subunit A (485 aa).

Residues K79 and S154 each act as charge relay system in the active site. Residue S178 is the Acyl-ester intermediate of the active site.

Belongs to the amidase family. GatA subfamily. As to quaternary structure, heterotrimer of A, B and C subunits.

The enzyme catalyses L-glutamyl-tRNA(Gln) + L-glutamine + ATP + H2O = L-glutaminyl-tRNA(Gln) + L-glutamate + ADP + phosphate + H(+). Its function is as follows. Allows the formation of correctly charged Gln-tRNA(Gln) through the transamidation of misacylated Glu-tRNA(Gln) in organisms which lack glutaminyl-tRNA synthetase. The reaction takes place in the presence of glutamine and ATP through an activated gamma-phospho-Glu-tRNA(Gln). This is Glutamyl-tRNA(Gln) amidotransferase subunit A from Clostridium botulinum (strain Kyoto / Type A2).